We begin with the raw amino-acid sequence, 208 residues long: Protein GrpE (208 aa).

A compositionally biased stretch (basic and acidic residues) spans 1 to 12 (MTNKDESVEKNT). The disordered stretch occupies residues 1–49 (MTNKDESVEKNTESTVEVTNVKQNIDDSVEQTEESKGHLQDEAIEETSD). Positions 13-23 (ESTVEVTNVKQ) are enriched in polar residues.

It belongs to the GrpE family. As to quaternary structure, homodimer.

The protein localises to the cytoplasm. Functionally, participates actively in the response to hyperosmotic and heat shock by preventing the aggregation of stress-denatured proteins, in association with DnaK and GrpE. It is the nucleotide exchange factor for DnaK and may function as a thermosensor. Unfolded proteins bind initially to DnaJ; upon interaction with the DnaJ-bound protein, DnaK hydrolyzes its bound ATP, resulting in the formation of a stable complex. GrpE releases ADP from DnaK; ATP binding to DnaK triggers the release of the substrate protein, thus completing the reaction cycle. Several rounds of ATP-dependent interactions between DnaJ, DnaK and GrpE are required for fully efficient folding. This Staphylococcus aureus (strain bovine RF122 / ET3-1) protein is Protein GrpE.